Reading from the N-terminus, the 878-residue chain is Alanine--tRNA ligase (878 aa).

Residues H571, H575, C673, and H677 each coordinate Zn(2+).

This sequence belongs to the class-II aminoacyl-tRNA synthetase family. Requires Zn(2+) as cofactor.

The protein localises to the cytoplasm. It catalyses the reaction tRNA(Ala) + L-alanine + ATP = L-alanyl-tRNA(Ala) + AMP + diphosphate. In terms of biological role, catalyzes the attachment of alanine to tRNA(Ala) in a two-step reaction: alanine is first activated by ATP to form Ala-AMP and then transferred to the acceptor end of tRNA(Ala). Also edits incorrectly charged Ser-tRNA(Ala) and Gly-tRNA(Ala) via its editing domain. The chain is Alanine--tRNA ligase from Syntrophus aciditrophicus (strain SB).